Consider the following 535-residue polypeptide: Dimethylaniline monooxygenase [N-oxide-forming] 2 (535 aa).

Ala-2 is subject to N-acetylalanine. FAD contacts are provided by residues 9–13, Glu-32, 40–41, and 61–62; these read GAGVS, LW, and NT. NADP(+)-binding positions include 60–61 and 195–198; these read TN and SAAD. Lys-492 participates in a covalent cross-link: Glycyl lysine isopeptide (Lys-Gly) (interchain with G-Cter in SUMO). Residues 510–530 form a helical membrane-spanning segment; that stretch reads APVSFLLKILGLLAVVLAFFF.

It belongs to the FMO family. FAD serves as cofactor. Requires Mg(2+) as cofactor.

It is found in the microsome membrane. Its subcellular location is the endoplasmic reticulum membrane. In terms of biological role, catalyzes the oxidative metabolism of numerous xenobiotics, including mainly therapeutic drugs and insecticides that contain a soft nucleophile, most commonly nitrogen and sulfur and participates to their bioactivation. Catalyzes the S-oxygenation of the prodrug ethionamide (ETA) to the S-oxide (ETASO), the first step in its bioactivation following by the second oxygenation to the sulfinic acid but to a lesser extend. The sequence is that of Dimethylaniline monooxygenase [N-oxide-forming] 2 from Mus musculus (Mouse).